Here is a 227-residue protein sequence, read N- to C-terminus: dTTP/UTP pyrophosphatase (227 aa).

D98 functions as the Proton acceptor in the catalytic mechanism.

This sequence belongs to the Maf family. YhdE subfamily. A divalent metal cation is required as a cofactor.

The protein localises to the cytoplasm. It catalyses the reaction dTTP + H2O = dTMP + diphosphate + H(+). It carries out the reaction UTP + H2O = UMP + diphosphate + H(+). Its function is as follows. Nucleoside triphosphate pyrophosphatase that hydrolyzes dTTP and UTP. May have a dual role in cell division arrest and in preventing the incorporation of modified nucleotides into cellular nucleic acids. The protein is dTTP/UTP pyrophosphatase of Bartonella quintana (strain Toulouse) (Rochalimaea quintana).